The primary structure comprises 406 residues: UPF0754 membrane protein SYNPCC7002_A1087 (406 aa).

The chain crosses the membrane as a helical span at residues 384–404 (IVNLGGVLGFLVGVAQSVILL).

The protein belongs to the UPF0754 family.

It localises to the cell inner membrane. In Picosynechococcus sp. (strain ATCC 27264 / PCC 7002 / PR-6) (Agmenellum quadruplicatum), this protein is UPF0754 membrane protein SYNPCC7002_A1087.